Reading from the N-terminus, the 142-residue chain is Hemoglobin subunit alpha (142 aa).

The 141-residue stretch at 2 to 142 folds into the Globin domain; sequence VLSPADKSNV…VSTVLTSKYR (141 aa). The residue at position 4 (Ser-4) is a Phosphoserine. 2 positions are modified to N6-succinyllysine: Lys-8 and Lys-12. N6-acetyllysine; alternate is present on Lys-17. Lys-17 bears the N6-succinyllysine; alternate mark. Residue Tyr-25 is modified to Phosphotyrosine. Phosphoserine is present on Ser-36. At Lys-41 the chain carries N6-succinyllysine. At Ser-50 the chain carries Phosphoserine. His-59 is a binding site for O2. His-88 lines the heme b pocket. Ser-103 bears the Phosphoserine mark. Thr-109 carries the post-translational modification Phosphothreonine. The residue at position 125 (Ser-125) is a Phosphoserine. 2 positions are modified to phosphothreonine: Thr-135 and Thr-138. Ser-139 is subject to Phosphoserine.

Belongs to the globin family. Heterotetramer of two alpha chains and two beta chains. As to expression, red blood cells.

Involved in oxygen transport from the lung to the various peripheral tissues. Functionally, hemopressin acts as an antagonist peptide of the cannabinoid receptor CNR1. Hemopressin-binding efficiently blocks cannabinoid receptor CNR1 and subsequent signaling. The sequence is that of Hemoglobin subunit alpha (HBA) from Ursus maritimus (Polar bear).